The sequence spans 124 residues: Fluoride-specific ion channel FluC (124 aa).

Helical transmembrane passes span 36 to 56 (VGTM…VVVL), 63 to 83 (YAPF…AFSL), and 99 to 119 (AYVG…MAAV). The Na(+) site is built by G73 and T76.

The protein belongs to the fluoride channel Fluc/FEX (TC 1.A.43) family.

The protein resides in the cell inner membrane. The enzyme catalyses fluoride(in) = fluoride(out). Na(+) is not transported, but it plays an essential structural role and its presence is essential for fluoride channel function. Functionally, fluoride-specific ion channel. Important for reducing fluoride concentration in the cell, thus reducing its toxicity. The polypeptide is Fluoride-specific ion channel FluC (Cereibacter sphaeroides (strain ATCC 17029 / ATH 2.4.9) (Rhodobacter sphaeroides)).